Reading from the N-terminus, the 122-residue chain is Large ribosomal subunit protein uL14 (122 aa).

It belongs to the universal ribosomal protein uL14 family. As to quaternary structure, part of the 50S ribosomal subunit. Forms a cluster with proteins L3 and L19. In the 70S ribosome, L14 and L19 interact and together make contacts with the 16S rRNA in bridges B5 and B8.

Binds to 23S rRNA. Forms part of two intersubunit bridges in the 70S ribosome. The protein is Large ribosomal subunit protein uL14 of Pediococcus pentosaceus (strain ATCC 25745 / CCUG 21536 / LMG 10740 / 183-1w).